The primary structure comprises 190 residues: Probable thymidylate kinase (190 aa).

9–16 (GIDGAGKT) lines the ATP pocket.

It belongs to the thymidylate kinase family.

The catalysed reaction is dTMP + ATP = dTDP + ADP. The protein is Probable thymidylate kinase (tmk1) of Sulfurisphaera tokodaii (strain DSM 16993 / JCM 10545 / NBRC 100140 / 7) (Sulfolobus tokodaii).